A 153-amino-acid polypeptide reads, in one-letter code: 6,7-dimethyl-8-ribityllumazine synthase (153 aa).

Residues Phe-21, 55-57 (AFE), and 79-81 (CVI) each bind 5-amino-6-(D-ribitylamino)uracil. 84–85 (AT) is a (2S)-2-hydroxy-3-oxobutyl phosphate binding site. His-87 functions as the Proton donor in the catalytic mechanism. Position 112 (Phe-112) interacts with 5-amino-6-(D-ribitylamino)uracil. Arg-126 lines the (2S)-2-hydroxy-3-oxobutyl phosphate pocket.

This sequence belongs to the DMRL synthase family. In terms of assembly, forms an icosahedral capsid composed of 60 subunits, arranged as a dodecamer of pentamers.

The enzyme catalyses (2S)-2-hydroxy-3-oxobutyl phosphate + 5-amino-6-(D-ribitylamino)uracil = 6,7-dimethyl-8-(1-D-ribityl)lumazine + phosphate + 2 H2O + H(+). The protein operates within cofactor biosynthesis; riboflavin biosynthesis; riboflavin from 2-hydroxy-3-oxobutyl phosphate and 5-amino-6-(D-ribitylamino)uracil: step 1/2. In terms of biological role, catalyzes the formation of 6,7-dimethyl-8-ribityllumazine by condensation of 5-amino-6-(D-ribitylamino)uracil with 3,4-dihydroxy-2-butanone 4-phosphate. This is the penultimate step in the biosynthesis of riboflavin. The polypeptide is 6,7-dimethyl-8-ribityllumazine synthase (Staphylococcus epidermidis (strain ATCC 35984 / DSM 28319 / BCRC 17069 / CCUG 31568 / BM 3577 / RP62A)).